The primary structure comprises 520 residues: Peptide chain release factor 3 (520 aa).

The region spanning 8 to 277 (ESRKTFAIIS…FAPMPNARQT (270 aa)) is the tr-type G domain. Residues 17-24 (SHPDAGKT), 85-89 (DTPGH), and 139-142 (NKLD) each bind GTP.

It belongs to the TRAFAC class translation factor GTPase superfamily. Classic translation factor GTPase family. PrfC subfamily.

Its subcellular location is the cytoplasm. Functionally, increases the formation of ribosomal termination complexes and stimulates activities of RF-1 and RF-2. It binds guanine nucleotides and has strong preference for UGA stop codons. It may interact directly with the ribosome. The stimulation of RF-1 and RF-2 is significantly reduced by GTP and GDP, but not by GMP. In Staphylococcus aureus (strain MRSA252), this protein is Peptide chain release factor 3.